Consider the following 239-residue polypeptide: Ribulose-1,5-bisphosphate 5-phosphatase (239 aa).

Residue Asp-8 is the Nucleophile of the active site. Mg(2+) contacts are provided by Asp-8, Asp-10, and Asp-184. Asp-10 acts as the Proton donor in catalysis. The segment at Pro-205–Ser-239 is disordered. Residues Ser-214–Ile-228 show a composition bias toward basic and acidic residues.

Belongs to the HAD-like hydrolase superfamily. Mg(2+) serves as cofactor. The cofactor is Mn(2+). It depends on Co(2+) as a cofactor. Requires Ni(2+) as cofactor.

The catalysed reaction is D-ribulose 1,5-bisphosphate + H2O = D-ribulose 1-phosphate + phosphate. With respect to regulation, requires both monovalent and divalent ions for optimal activity. Optimal KCl concentration is higher than 2.5 M. Phosphatase involved in the non-carboxylating pentose bisphosphate pathway, a nucleoside degradation pathway present in some halophilic archaea. Catalyzes the dephosphorylation of ribulose 1,5-bisphosphate (RuBP) to ribulose 1-phosphate (Ru1P). Shows a strict substrate specificity toward RuBP. The polypeptide is Ribulose-1,5-bisphosphate 5-phosphatase (Halopiger xanaduensis (strain DSM 18323 / JCM 14033 / SH-6)).